A 44-amino-acid polypeptide reads, in one-letter code: NSCDCDIEWSSCSAYGFDHDEDYGFNEDTDRIIINTKAILLPTK.

The polypeptide is Unknown protein 1 (Lonomia obliqua (Moth)).